The primary structure comprises 287 residues: Shikimate dehydrogenase (NADP(+)) (287 aa).

Residues 20–22 (SRS) and threonine 67 contribute to the shikimate site. Lysine 71 (proton acceptor) is an active-site residue. Residue glutamate 84 coordinates NADP(+). Shikimate-binding residues include asparagine 93 and aspartate 108. Residues 132–136 (GAGGA) and methionine 226 each bind NADP(+). Residue tyrosine 228 participates in shikimate binding. Glycine 250 contacts NADP(+).

The protein belongs to the shikimate dehydrogenase family. In terms of assembly, homodimer.

The catalysed reaction is shikimate + NADP(+) = 3-dehydroshikimate + NADPH + H(+). The protein operates within metabolic intermediate biosynthesis; chorismate biosynthesis; chorismate from D-erythrose 4-phosphate and phosphoenolpyruvate: step 4/7. Functionally, involved in the biosynthesis of the chorismate, which leads to the biosynthesis of aromatic amino acids. Catalyzes the reversible NADPH linked reduction of 3-dehydroshikimate (DHSA) to yield shikimate (SA). The sequence is that of Shikimate dehydrogenase (NADP(+)) from Bordetella petrii (strain ATCC BAA-461 / DSM 12804 / CCUG 43448).